The sequence spans 379 residues: C-C chemokine receptor type 7 (379 aa).

A signal peptide spans 1–24; the sequence is MDLGKPMKNVLVVALLVIFQVCLC. Residues 25–59 are Extracellular-facing; it reads QDEVTDNYIGDNTTVDYTLYESVCFKKDVRNFKAW. A glycan (N-linked (GlcNAc...) asparagine) is linked at Asn36. The chain crosses the membrane as a helical span at residues 60-86; the sequence is FLPIMYSIICFVGLLGNGLVMLTYIYF. Topologically, residues 87-95 are cytoplasmic; that stretch reads KRLKTMTDT. The helical transmembrane segment at 96 to 116 threads the bilayer; that stretch reads YLLNLALADILFLLTLPFWAY. The Extracellular portion of the chain corresponds to 117–130; that stretch reads SAAKSWVFGVHVCK. Cys129 and Cys210 are joined by a disulfide. A helical membrane pass occupies residues 131 to 152; it reads LIFGIYKISFFSGMLLLLCISI. At 153-170 the chain is on the cytoplasmic side; the sequence is DRYVAIVQAVSAHRHRAR. Residues 171–191 traverse the membrane as a helical segment; the sequence is VLLISKLSCLGIWMLAIVLST. Topologically, residues 192 to 219 are extracellular; sequence PEVMYSGIQKSSSEQALRCSLVTEHVEA. Residues 220-247 form a helical membrane-spanning segment; the sequence is LITIQVAQMVVGFLIPLMAMSFCYLVII. Topologically, residues 248–263 are cytoplasmic; that stretch reads RTLLQARNFERNKAIK. The chain crosses the membrane as a helical span at residues 264–289; that stretch reads VIIAVVVVFVAFQLPYNGVVLAHTVA. Residues 290–314 lie on the Extracellular side of the membrane; the sequence is NFNITSGTSCELSKQLNIAYDVTYS. N-linked (GlcNAc...) asparagine glycosylation is present at Asn292. The chain crosses the membrane as a helical span at residues 315–332; it reads LACVRCCVNPFLYAFIGV. Over 333–379 the chain is Cytoplasmic; that stretch reads KFRSDLFKLFKDLGCLSQEQLRQWSFCRHTRRSSMSVEAETTTTFSP.

This sequence belongs to the G-protein coupled receptor 1 family.

The protein resides in the cell membrane. Receptor for the MIP-3-beta chemokine. This chain is C-C chemokine receptor type 7 (CCR7), found in Bos taurus (Bovine).